A 463-amino-acid polypeptide reads, in one-letter code: Asparagine--tRNA ligase (463 aa).

It belongs to the class-II aminoacyl-tRNA synthetase family. As to quaternary structure, homodimer.

The protein resides in the cytoplasm. It catalyses the reaction tRNA(Asn) + L-asparagine + ATP = L-asparaginyl-tRNA(Asn) + AMP + diphosphate + H(+). This Bacillus cereus (strain ATCC 10987 / NRS 248) protein is Asparagine--tRNA ligase.